We begin with the raw amino-acid sequence, 65 residues long: Small, acid-soluble spore protein C3 (65 aa).

Belongs to the alpha/beta-type SASP family.

In terms of biological role, SASP are bound to spore DNA. They are double-stranded DNA-binding proteins that cause DNA to change to an a-like conformation. They protect the DNA backbone from chemical and enzymatic cleavage and are thus involved in dormant spore's high resistance to UV light. This chain is Small, acid-soluble spore protein C3 (SASP-C3), found in Priestia megaterium (Bacillus megaterium).